Reading from the N-terminus, the 323-residue chain is COP9 signalosome complex subunit 6 (323 aa).

The region spanning 37–170 (VALHPLVILN…VSVFESVIDI (134 aa)) is the MPN domain.

The protein belongs to the peptidase M67A family. CSN6 subfamily. In terms of assembly, component of the CSN complex, composed of COPS1/GPS1, COPS2, COPS3, COPS4, COPS5, COPS6, COPS7 (COPS7A or COPS7B), COPS8 and COPS9. In the complex, it probably interacts directly with COPS2, COPS4, COPS5, COPS7 (COPS7A or COPS7B) and COPS9. Interacts with the translation initiation factor EIF3S6. Interacts weakly with RBX1. Directly interacts with COP1 and 14-3-3 protein sigma/SFN. Interacts with ERCC6.

It localises to the cytoplasm. It is found in the nucleus. In terms of biological role, component of the COP9 signalosome complex (CSN), a complex involved in various cellular and developmental processes. The CSN complex is an essential regulator of the ubiquitin (Ubl) conjugation pathway by mediating the deneddylation of the cullin subunits of SCF-type E3 ligase complexes, leading to decrease the Ubl ligase activity of SCF-type complexes such as SCF, CSA or DDB2. The complex is also involved in phosphorylation of p53/TP53, c-jun/JUN, IkappaBalpha/NFKBIA, ITPK1 and IRF8, possibly via its association with CK2 and PKD kinases. CSN-dependent phosphorylation of TP53 and JUN promotes and protects degradation by the Ubl system, respectively. Has some glucocorticoid receptor-responsive activity. Stabilizes COP1 through reducing COP1 auto-ubiquitination and decelerating COP1 turnover rate, hence regulates the ubiquitination of COP1 targets, including SFN. The chain is COP9 signalosome complex subunit 6 (COPS6) from Sus scrofa (Pig).